The following is a 360-amino-acid chain: Peptide chain release factor 1 (360 aa).

Gln235 carries the N5-methylglutamine modification.

This sequence belongs to the prokaryotic/mitochondrial release factor family. Post-translationally, methylated by PrmC. Methylation increases the termination efficiency of RF1.

The protein resides in the cytoplasm. Peptide chain release factor 1 directs the termination of translation in response to the peptide chain termination codons UAG and UAA. This chain is Peptide chain release factor 1, found in Cupriavidus taiwanensis (strain DSM 17343 / BCRC 17206 / CCUG 44338 / CIP 107171 / LMG 19424 / R1) (Ralstonia taiwanensis (strain LMG 19424)).